Consider the following 126-residue polypeptide: Alpha-1-purothionin (126 aa).

The first 16 residues, 1-16, serve as a signal peptide directing secretion; that stretch reads CLLILGLVLEQLQVEG. 4 cysteine pairs are disulfide-bonded: Cys-19/Cys-55, Cys-20/Cys-47, Cys-28/Cys-45, and Cys-32/Cys-41. Residues 62–126 constitute a propeptide, acidic domain; the sequence is LALESNSDEP…DAGLPSLDAY (65 aa).

It belongs to the plant thionin (TC 1.C.44) family. 4 C-C subfamily.

The protein resides in the secreted. Thionins are small plant proteins which are toxic to animal cells. They seem to exert their toxic effect at the level of the cell membrane. Their precise function is not known. The polypeptide is Alpha-1-purothionin (THI1.1) (Triticum aestivum (Wheat)).